The following is a 294-amino-acid chain: Autophagy protein 5 (294 aa).

Lysine 149 is covalently cross-linked (Glycyl lysine isopeptide (Lys-Gly) (interchain with G-Cter in ATG12)).

Belongs to the ATG5 family. Conjugated with ATG12. The ATG5-ATG12 conjugate forms a complex with several units of ATG16. The ATG12-ATG5 conjugate also associates with ATG3. Post-translationally, conjugated to ATG12; which is essential for autophagy. Conjugation with ATG12 involves ATG7 as an E1-like activating enzyme and ATG10 as an E2-like conjugating enzyme.

It is found in the preautophagosomal structure membrane. Its function is as follows. Involved in cytoplasm to vacuole transport (Cvt) and autophagic vesicle formation. Autophagy is essential for maintenance of amino acid levels and protein synthesis under nitrogen starvation. Required for selective autophagic degradation of the nucleus (nucleophagy). Also required for mitophagy, which eliminates defective or superfluous mitochondria in order to fulfill cellular energy requirements and prevent excess ROS production. Conjugation with ATG12, through a ubiquitin-like conjugating system involving ATG7 as an E1-like activating enzyme and ATG10 as an E2-like conjugating enzyme, is essential for its function. The ATG12-ATG5 conjugate acts as an E3-like enzyme which is required for lipidation of ATG8 and ATG8 association to the vesicle membranes. ATG12-ATG5 rearranges the ATG3 catalytic center and enhances its E2 activity. Plays a role in the regulation of filamentous growth and chronological longevity. This is Autophagy protein 5 (ATG5) from Saccharomyces cerevisiae (strain YJM789) (Baker's yeast).